Consider the following 461-residue polypeptide: Probable outer membrane lipoprotein SilC (461 aa).

Positions 1 to 17 are cleaved as a signal peptide; sequence MFKLKLLSISTIFILAG. The N-palmitoyl cysteine moiety is linked to residue Cys-18. The S-diacylglycerol cysteine moiety is linked to residue Cys-18.

The protein belongs to the outer membrane factor (OMF) (TC 1.B.17) family.

Its subcellular location is the cell outer membrane. In terms of biological role, component of the sil cation-efflux system that confers resistance to silver. May be part of a three-component cation/proton antiporter. This Salmonella typhimurium protein is Probable outer membrane lipoprotein SilC (silC).